We begin with the raw amino-acid sequence, 102 residues long: NADH-quinone oxidoreductase subunit K 1 (102 aa).

3 helical membrane passes run threonine 3–leucine 23, valine 29–phenylalanine 49, and isoleucine 62–isoleucine 82.

Belongs to the complex I subunit 4L family. As to quaternary structure, NDH-1 is composed of 14 different subunits. Subunits NuoA, H, J, K, L, M, N constitute the membrane sector of the complex.

It is found in the cell inner membrane. It catalyses the reaction a quinone + NADH + 5 H(+)(in) = a quinol + NAD(+) + 4 H(+)(out). Functionally, NDH-1 shuttles electrons from NADH, via FMN and iron-sulfur (Fe-S) centers, to quinones in the respiratory chain. The immediate electron acceptor for the enzyme in this species is believed to be ubiquinone. Couples the redox reaction to proton translocation (for every two electrons transferred, four hydrogen ions are translocated across the cytoplasmic membrane), and thus conserves the redox energy in a proton gradient. This is NADH-quinone oxidoreductase subunit K 1 from Syntrophobacter fumaroxidans (strain DSM 10017 / MPOB).